The following is a 263-amino-acid chain: Inactive adenylate kinase (263 aa).

It belongs to the adenylate kinase family.

The protein resides in the cytoplasm. Lacks adenylate kinase activity. The chain is Inactive adenylate kinase from Plasmodium falciparum (isolate 3D7).